We begin with the raw amino-acid sequence, 550 residues long: Chaperonin GroEL (550 aa).

Residues Thr-30–Pro-33, Lys-51, Asp-87–Thr-91, Gly-415, and Asp-495 each bind ATP.

It belongs to the chaperonin (HSP60) family. In terms of assembly, forms a cylinder of 14 subunits composed of two heptameric rings stacked back-to-back. Interacts with the co-chaperonin GroES.

The protein resides in the cytoplasm. It catalyses the reaction ATP + H2O + a folded polypeptide = ADP + phosphate + an unfolded polypeptide.. In terms of biological role, together with its co-chaperonin GroES, plays an essential role in assisting protein folding. The GroEL-GroES system forms a nano-cage that allows encapsulation of the non-native substrate proteins and provides a physical environment optimized to promote and accelerate protein folding. The chain is Chaperonin GroEL from Shewanella piezotolerans (strain WP3 / JCM 13877).